Here is a 202-residue protein sequence, read N- to C-terminus: Holliday junction branch migration complex subunit RuvA (202 aa).

Residues 1 to 63 are domain I; it reads MIAFLSGRVV…EDSLTLFGFA (63 aa). A domain II region spans residues 64–142; sequence DDDERDTFER…EPGGDTAATP (79 aa). A flexible linker region spans residues 143-152; it reads EQSAAAAPRN. Residues 152–202 form a domain III region; it reads NWRAQVVSGLVNLGWSTREAEAAADAVAAEAGEQPDVAALLRSALRRLSRA.

This sequence belongs to the RuvA family. As to quaternary structure, homotetramer. Forms an RuvA(8)-RuvB(12)-Holliday junction (HJ) complex. HJ DNA is sandwiched between 2 RuvA tetramers; dsDNA enters through RuvA and exits via RuvB. An RuvB hexamer assembles on each DNA strand where it exits the tetramer. Each RuvB hexamer is contacted by two RuvA subunits (via domain III) on 2 adjacent RuvB subunits; this complex drives branch migration. In the full resolvosome a probable DNA-RuvA(4)-RuvB(12)-RuvC(2) complex forms which resolves the HJ.

The protein resides in the cytoplasm. Functionally, the RuvA-RuvB-RuvC complex processes Holliday junction (HJ) DNA during genetic recombination and DNA repair, while the RuvA-RuvB complex plays an important role in the rescue of blocked DNA replication forks via replication fork reversal (RFR). RuvA specifically binds to HJ cruciform DNA, conferring on it an open structure. The RuvB hexamer acts as an ATP-dependent pump, pulling dsDNA into and through the RuvAB complex. HJ branch migration allows RuvC to scan DNA until it finds its consensus sequence, where it cleaves and resolves the cruciform DNA. The chain is Holliday junction branch migration complex subunit RuvA from Thermobifida fusca (strain YX).